Here is a 135-residue protein sequence, read N- to C-terminus: uncharacterized protein (135 aa).

Residues 8–123 (PKGIIVLKTL…IFIYVAINKT (116 aa)) enclose the HotDog ACOT-type domain.

It belongs to the acyl coenzyme A hydrolase family.

This is an uncharacterized protein from Buchnera aphidicola subsp. Acyrthosiphon pisum (strain APS) (Acyrthosiphon pisum symbiotic bacterium).